Consider the following 168-residue polypeptide: MLDMTERQVESVLIEIPKGSRNKYEYDKEKKVIKFDRMLFSSMVYPCDYGFFPDTLALDGDPLDALVLTWEPTFPGCVIDVHPVALLDMKDDKGRDEKILCVPETDPLWNYIETLEQVPPHLLKEIVHFFETYKNLEGKHVIVIGWEGLDAAVDMLREAKSRYLEKNK.

Substrate-binding residues include K23, R37, and Y49. Residues D59, D64, and D96 each coordinate Mg(2+). Y133 is a substrate binding site.

Belongs to the PPase family. In terms of assembly, homohexamer. Mg(2+) serves as cofactor.

The protein resides in the cytoplasm. The enzyme catalyses diphosphate + H2O = 2 phosphate + H(+). Functionally, catalyzes the hydrolysis of inorganic pyrophosphate (PPi) forming two phosphate ions. The polypeptide is Inorganic pyrophosphatase (Methanosarcina acetivorans (strain ATCC 35395 / DSM 2834 / JCM 12185 / C2A)).